We begin with the raw amino-acid sequence, 285 residues long: Bifunctional protein FolD (285 aa).

Residues 165–167 (GRS) and Ser190 each bind NADP(+).

The protein belongs to the tetrahydrofolate dehydrogenase/cyclohydrolase family. In terms of assembly, homodimer.

It carries out the reaction (6R)-5,10-methylene-5,6,7,8-tetrahydrofolate + NADP(+) = (6R)-5,10-methenyltetrahydrofolate + NADPH. It catalyses the reaction (6R)-5,10-methenyltetrahydrofolate + H2O = (6R)-10-formyltetrahydrofolate + H(+). It participates in one-carbon metabolism; tetrahydrofolate interconversion. Catalyzes the oxidation of 5,10-methylenetetrahydrofolate to 5,10-methenyltetrahydrofolate and then the hydrolysis of 5,10-methenyltetrahydrofolate to 10-formyltetrahydrofolate. This Burkholderia orbicola (strain AU 1054) protein is Bifunctional protein FolD.